Consider the following 37-residue polypeptide: Mu-cyrtautoxin-As1a (37 aa).

Intrachain disulfides connect Cys-1-Cys-15, Cys-8-Cys-19, Cys-14-Cys-35, and Cys-26-Cys-31.

It belongs to the neurotoxin 13 (insecticidal toxin ABC) family. 01 (Aps III) subfamily. In terms of tissue distribution, expressed by the venom gland.

The protein resides in the secreted. Functionally, the recombinant mu-cyrtautoxin-As1a potently and voltage-independently blocks voltage-gated sodium channels (Nav) of insects. It acts by pluging the outer vestibule of the channel. It acts in combination with a weak (30%) voltage-independent block of insect voltage-gated calcium (Cav) channels (low-voltage and high-voltage channels). Tested on DUM neurons, it inhibits sodium currents with an IC(50) of 540 nM (and a Hill coefficient &gt;1, reflecting an incomplete block at higher concentrations). In vivo, it induces flaccid paralysis in adult Australian sheep blowfly Lucilia cuprina. It is both paralytic and lethal, when injected into lepidopteran larvae. It is a slower acting toxin, being lethal at 24 hours, but not paralytic at 1 hour post-injection. The polypeptide is Mu-cyrtautoxin-As1a (Apomastus schlingeri (Trap-door spider)).